The chain runs to 146 residues: Phospholipase A2 147 (146 aa).

The first 19 residues, 1–19, serve as a signal peptide directing secretion; the sequence is MYPAHLLVLLAVCVSLLGA. The propeptide occupies 20 to 27; it reads ASVPPQPL. Cystine bridges form between Cys-38/Cys-98, Cys-54/Cys-145, Cys-56/Cys-72, Cys-71/Cys-126, Cys-78/Cys-119, Cys-87/Cys-112, and Cys-105/Cys-117. Residues Tyr-55, Gly-57, and Gly-59 each contribute to the Ca(2+) site. His-75 is an active-site residue. Ca(2+) is bound at residue Asp-76. The active site involves Asp-120.

The protein belongs to the phospholipase A2 family. Group I subfamily. D49 sub-subfamily. It depends on Ca(2+) as a cofactor. As to expression, expressed by the venom gland.

Its subcellular location is the secreted. It carries out the reaction a 1,2-diacyl-sn-glycero-3-phosphocholine + H2O = a 1-acyl-sn-glycero-3-phosphocholine + a fatty acid + H(+). Its function is as follows. Snake venom phospholipase A2 (PLA2) that inhibits collagen-induced platelet aggregation. PLA2 catalyzes the calcium-dependent hydrolysis of the 2-acyl groups in 3-sn-phosphoglycerides. The polypeptide is Phospholipase A2 147 (Drysdalia coronoides (White-lipped snake)).